We begin with the raw amino-acid sequence, 122 residues long: Large ribosomal subunit protein uL18 (122 aa).

The protein belongs to the universal ribosomal protein uL18 family. Part of the 50S ribosomal subunit; part of the 5S rRNA/L5/L18/L25 subcomplex. Contacts the 5S and 23S rRNAs.

This is one of the proteins that bind and probably mediate the attachment of the 5S RNA into the large ribosomal subunit, where it forms part of the central protuberance. The sequence is that of Large ribosomal subunit protein uL18 from Desulfitobacterium hafniense (strain DSM 10664 / DCB-2).